A 33-amino-acid chain; its full sequence is Mu-theraphotoxin-Osp1a (33 aa).

Intrachain disulfides connect Cys-2–Cys-17, Cys-9–Cys-22, and Cys-16–Cys-29.

It belongs to the neurotoxin 10 (Hwtx-1) family. In terms of tissue distribution, expressed by the venom gland.

It is found in the secreted. Its function is as follows. Voltage-gated sodium channel Nav1.7/SCN9A inhibitor. This chain is Mu-theraphotoxin-Osp1a, found in Orphnaecus sp. (strain Sibaliw/Philippines) (Tarantula spider).